The following is a 445-amino-acid chain: Glycine--tRNA ligase (445 aa).

Residues Arg-97 and Glu-145 each coordinate substrate. ATP is bound by residues 177–179, 187–192, 262–263, and 308–311; these read RNE, FRTCEF, EV, and GLTR. 192 to 196 contributes to the substrate binding site; sequence FEQME. 304–308 serves as a coordination point for substrate; that stretch reads ETSAG.

The protein belongs to the class-II aminoacyl-tRNA synthetase family. Homodimer.

Its subcellular location is the cytoplasm. The enzyme catalyses tRNA(Gly) + glycine + ATP = glycyl-tRNA(Gly) + AMP + diphosphate. Its function is as follows. Catalyzes the attachment of glycine to tRNA(Gly). The sequence is that of Glycine--tRNA ligase from Borreliella burgdorferi (strain ZS7) (Borrelia burgdorferi).